The sequence spans 282 residues: Shikimate dehydrogenase (NADP(+)) (282 aa).

Shikimate is bound by residues 15–17 (SKS) and Thr62. Catalysis depends on Lys66, which acts as the Proton acceptor. Residues Asn87 and Asp103 each coordinate shikimate. NADP(+) contacts are provided by residues 127–131 (GAGGA), 151–156 (NRTHTK), and Met220. Shikimate is bound at residue Tyr222. Gly244 serves as a coordination point for NADP(+).

This sequence belongs to the shikimate dehydrogenase family. As to quaternary structure, homodimer.

The enzyme catalyses shikimate + NADP(+) = 3-dehydroshikimate + NADPH + H(+). It functions in the pathway metabolic intermediate biosynthesis; chorismate biosynthesis; chorismate from D-erythrose 4-phosphate and phosphoenolpyruvate: step 4/7. Its function is as follows. Involved in the biosynthesis of the chorismate, which leads to the biosynthesis of aromatic amino acids. Catalyzes the reversible NADPH linked reduction of 3-dehydroshikimate (DHSA) to yield shikimate (SA). The chain is Shikimate dehydrogenase (NADP(+)) from Shewanella baltica (strain OS155 / ATCC BAA-1091).